The chain runs to 286 residues: Probable xyloglucan endotransglucosylase/hydrolase protein 23 (286 aa).

An N-terminal signal peptide occupies residues 1 to 24 (MAMISYSTIVVALLASFMICSVSA). Residues 25–214 (NFQRDVEITW…WSKAPFTASY (190 aa)) form the GH16 domain. The active-site Nucleophile is the glutamate 100. The active-site Proton donor is glutamate 104. Glutamate 104 contacts xyloglucan. The N-linked (GlcNAc...) asparagine glycan is linked to asparagine 108. Residues 117–119 (HTN), 127–129 (DRE), 193–194 (EW), and glycine 198 contribute to the xyloglucan site. Residues cysteine 222 and cysteine 231 are joined by a disulfide bond. Residue asparagine 233 is glycosylated (N-linked (GlcNAc...) asparagine). A disulfide bridge links cysteine 269 with cysteine 283. Arginine 274 is a binding site for xyloglucan.

The protein belongs to the glycosyl hydrolase 16 family. XTH group 2 subfamily. In terms of processing, contains at least one intrachain disulfide bond essential for its enzymatic activity.

The protein localises to the secreted. Its subcellular location is the cell wall. The protein resides in the extracellular space. It is found in the apoplast. The enzyme catalyses breaks a beta-(1-&gt;4) bond in the backbone of a xyloglucan and transfers the xyloglucanyl segment on to O-4 of the non-reducing terminal glucose residue of an acceptor, which can be a xyloglucan or an oligosaccharide of xyloglucan.. Catalyzes xyloglucan endohydrolysis (XEH) and/or endotransglycosylation (XET). Cleaves and religates xyloglucan polymers, an essential constituent of the primary cell wall, and thereby participates in cell wall construction of growing tissues. The chain is Probable xyloglucan endotransglucosylase/hydrolase protein 23 (XTH23) from Arabidopsis thaliana (Mouse-ear cress).